Here is a 395-residue protein sequence, read N- to C-terminus: Elongation factor Tu (395 aa).

The region spanning 10–204 is the tr-type G domain; sequence KPHVNIGTIG…AVDSYIPTPE (195 aa). The interval 19–26 is G1; sequence GHVDHGKT. Residue 19-26 coordinates GTP; that stretch reads GHVDHGKT. Thr26 is a Mg(2+) binding site. The tract at residues 60–64 is G2; that stretch reads GITIS. A G3 region spans residues 81–84; the sequence is DCPG. GTP-binding positions include 81–85 and 136–139; these read DCPGH and NKCD. A G4 region spans residues 136 to 139; that stretch reads NKCD. The G5 stretch occupies residues 174–176; it reads SAL.

Belongs to the TRAFAC class translation factor GTPase superfamily. Classic translation factor GTPase family. EF-Tu/EF-1A subfamily. In terms of assembly, monomer. Phosphorylated on serine and/or threonine residue(s). Dephosphorylated by stp.

It is found in the cytoplasm. It carries out the reaction GTP + H2O = GDP + phosphate + H(+). In terms of biological role, GTP hydrolase that promotes the GTP-dependent binding of aminoacyl-tRNA to the A-site of ribosomes during protein biosynthesis. The chain is Elongation factor Tu from Listeria innocua serovar 6a (strain ATCC BAA-680 / CLIP 11262).